The following is a 256-amino-acid chain: uncharacterized protein (256 aa).

7 helical membrane passes run 32 to 52, 59 to 79, 112 to 132, 156 to 176, 184 to 204, 207 to 227, and 230 to 250; these read ILAS…GSYF, FAFP…AYGG, YAGN…TGLF, LFFR…IPMS, LFTM…HSIA, CTFA…MGAV, and LIPV…WMYY.

Belongs to the FNT transporter (TC 1.A.16) family.

It localises to the cell membrane. This is an uncharacterized protein from Bacillus subtilis (strain 168).